A 960-amino-acid polypeptide reads, in one-letter code: Cyclin-dependent kinase-like 5 (960 aa).

One can recognise a Protein kinase domain in the interval 13–297; it reads FEILGVVGEG…TEQCLNHPTF (285 aa). Residues 19–27 and Lys-42 contribute to the ATP site; that span reads VGEGAYGVV. Asp-135 functions as the Proton acceptor in the catalytic mechanism. 4 disordered regions span residues 300–349, 382–566, 646–834, and 848–960; these read QRLL…IQNL, KTYQ…RHSK, SPQP…TQSQ, and ASNH…ETAL. 2 stretches are compositionally biased toward polar residues: residues 319–336 and 382–402; these read ESST…TALQ and KTYQ…NNNI. Residue Ser-407 is modified to Phosphoserine. Residues 407 to 417 are compositionally biased toward basic and acidic residues; sequence SPKEAKSKTEF. Composition is skewed to polar residues over residues 434–462, 473–482, and 510–548; these read LKSN…QPNE, IPQSSRSPSY, and EPST…SGRN. Ser-479 carries the phosphoserine modification. 2 stretches are compositionally biased toward basic and acidic residues: residues 549–559 and 679–704; these read NRNEGTLDSRR and QKSE…RHLY. Ser-720 is modified (phosphoserine). A compositionally biased stretch (polar residues) spans 728–748; the sequence is HENNVSTRVSSLPSESSSGTN. Ser-761 carries the post-translational modification Phosphoserine. The span at 769-778 shows a compositional bias: basic and acidic residues; the sequence is EQLKEKEKQG. Residues 791-816 are compositionally biased toward polar residues; sequence QTVPNSDSPDLLTLQKSIHSASTPSS. Residues 817–827 are compositionally biased toward basic and acidic residues; the sequence is RPKEWRPEKIS. Composition is skewed to polar residues over residues 862–872, 880–890, and 914–928; these read LTAQQTKNSFS, SQASGGSSNIR, and SSVT…SYSE.

The protein belongs to the protein kinase superfamily. CMGC Ser/Thr protein kinase family. CDC2/CDKX subfamily. As to quaternary structure, interacts with MECP2. Post-translationally, autophosphorylated. In terms of tissue distribution, expressed in brain, lung, kidney, prostate, ovary, placenta, pancreas and testis. As to expression, predominant transcript in brain.

The protein localises to the nucleus. The protein resides in the cytoplasm. Its subcellular location is the cytoskeleton. It localises to the cilium basal body. It is found in the microtubule organizing center. The protein localises to the centrosome. The enzyme catalyses L-seryl-[protein] + ATP = O-phospho-L-seryl-[protein] + ADP + H(+). It catalyses the reaction L-threonyl-[protein] + ATP = O-phospho-L-threonyl-[protein] + ADP + H(+). Its function is as follows. Mediates phosphorylation of MECP2. May regulate ciliogenesis. In Homo sapiens (Human), this protein is Cyclin-dependent kinase-like 5.